We begin with the raw amino-acid sequence, 63 residues long: Cecropin-B (63 aa).

Residues 1 to 22 (MNFNKIFVFVALILAISLGNTE) form the signal peptide. At R62 the chain carries Arginine amide.

This sequence belongs to the cecropin family.

It localises to the secreted. Its function is as follows. Cecropins have lytic and antibacterial activity against several Gram-positive and Gram-negative bacteria. The chain is Cecropin-B (CecB) from Drosophila simulans (Fruit fly).